A 245-amino-acid chain; its full sequence is 3-deoxy-manno-octulosonate cytidylyltransferase (245 aa).

The protein belongs to the KdsB family.

Its subcellular location is the cytoplasm. It catalyses the reaction 3-deoxy-alpha-D-manno-oct-2-ulosonate + CTP = CMP-3-deoxy-beta-D-manno-octulosonate + diphosphate. It functions in the pathway nucleotide-sugar biosynthesis; CMP-3-deoxy-D-manno-octulosonate biosynthesis; CMP-3-deoxy-D-manno-octulosonate from 3-deoxy-D-manno-octulosonate and CTP: step 1/1. It participates in bacterial outer membrane biogenesis; lipopolysaccharide biosynthesis. Its function is as follows. Activates KDO (a required 8-carbon sugar) for incorporation into bacterial lipopolysaccharide in Gram-negative bacteria. This is 3-deoxy-manno-octulosonate cytidylyltransferase from Rhodopseudomonas palustris (strain BisB5).